Consider the following 506-residue polypeptide: Putative amidase (506 aa).

Catalysis depends on charge relay system residues Lys121 and Ser196. Ser220 (acyl-ester intermediate) is an active-site residue.

This sequence belongs to the amidase family.

It catalyses the reaction a monocarboxylic acid amide + H2O = a monocarboxylate + NH4(+). This is Putative amidase from Synechocystis sp. (strain ATCC 27184 / PCC 6803 / Kazusa).